The primary structure comprises 425 residues: DNA replication and repair protein RecF (425 aa).

Gly30 to Thr37 contacts ATP.

Belongs to the RecF family.

Its subcellular location is the cytoplasm. The RecF protein is involved in DNA metabolism; it is required for DNA replication and normal SOS inducibility. RecF binds preferentially to single-stranded, linear DNA. It also seems to bind ATP. This is DNA replication and repair protein RecF from Corynebacterium jeikeium (strain K411).